Reading from the N-terminus, the 263-residue chain is Type III pantothenate kinase (263 aa).

6-13 (DVGNTRIK) is an ATP binding site. Substrate contacts are provided by residues tyrosine 92 and 99–102 (GTDR). Aspartate 101 functions as the Proton acceptor in the catalytic mechanism. Threonine 124 is an ATP binding site. Threonine 174 serves as a coordination point for substrate.

The protein belongs to the type III pantothenate kinase family. As to quaternary structure, homodimer. NH4(+) serves as cofactor. It depends on K(+) as a cofactor.

Its subcellular location is the cytoplasm. It carries out the reaction (R)-pantothenate + ATP = (R)-4'-phosphopantothenate + ADP + H(+). It functions in the pathway cofactor biosynthesis; coenzyme A biosynthesis; CoA from (R)-pantothenate: step 1/5. Its function is as follows. Catalyzes the phosphorylation of pantothenate (Pan), the first step in CoA biosynthesis. This chain is Type III pantothenate kinase, found in Azoarcus sp. (strain BH72).